The sequence spans 208 residues: Protein-L-isoaspartate O-methyltransferase (208 aa).

Ser59 is an active-site residue.

It belongs to the methyltransferase superfamily. L-isoaspartyl/D-aspartyl protein methyltransferase family.

Its subcellular location is the cytoplasm. It carries out the reaction [protein]-L-isoaspartate + S-adenosyl-L-methionine = [protein]-L-isoaspartate alpha-methyl ester + S-adenosyl-L-homocysteine. Catalyzes the methyl esterification of L-isoaspartyl residues in peptides and proteins that result from spontaneous decomposition of normal L-aspartyl and L-asparaginyl residues. It plays a role in the repair and/or degradation of damaged proteins. This Salmonella arizonae (strain ATCC BAA-731 / CDC346-86 / RSK2980) protein is Protein-L-isoaspartate O-methyltransferase.